A 666-amino-acid polypeptide reads, in one-letter code: Protein SLY1 (666 aa).

4 repeat units span residues 106–142, 220–257, 436–474, and 478–514. Positions 106–514 are 4 X approximate repeats; the sequence is KENIDIIVND…QNKSLEDGSD (409 aa).

Belongs to the STXBP/unc-18/SEC1 family. Interacts with SED5.

Its subcellular location is the cytoplasm. It is found in the membrane. Functionally, able to suppress the functional loss of YPT1. SLY1 is essential for cell viability. May interact indirectly, or directly with YPT1. The chain is Protein SLY1 (SLY1) from Saccharomyces cerevisiae (strain ATCC 204508 / S288c) (Baker's yeast).